Reading from the N-terminus, the 252-residue chain is Probable transcriptional regulatory protein Tmel_0985 (252 aa).

Belongs to the TACO1 family.

The protein resides in the cytoplasm. This Thermosipho melanesiensis (strain DSM 12029 / CIP 104789 / BI429) protein is Probable transcriptional regulatory protein Tmel_0985.